The primary structure comprises 207 residues: Ribonuclease HII (207 aa).

Residues 10-199 enclose the RNase H type-2 domain; that stretch reads RLIAGVDEVG…VRNALLDAEL (190 aa). A divalent metal cation contacts are provided by aspartate 16, glutamate 17, and aspartate 108.

Belongs to the RNase HII family. Mn(2+) serves as cofactor. Mg(2+) is required as a cofactor.

It is found in the cytoplasm. The enzyme catalyses Endonucleolytic cleavage to 5'-phosphomonoester.. Functionally, endonuclease that specifically degrades the RNA of RNA-DNA hybrids. In Erwinia tasmaniensis (strain DSM 17950 / CFBP 7177 / CIP 109463 / NCPPB 4357 / Et1/99), this protein is Ribonuclease HII.